Consider the following 229-residue polypeptide: Large ribosomal subunit protein uL1 (229 aa).

This sequence belongs to the universal ribosomal protein uL1 family. As to quaternary structure, part of the 50S ribosomal subunit.

In terms of biological role, binds directly to 23S rRNA. The L1 stalk is quite mobile in the ribosome, and is involved in E site tRNA release. Its function is as follows. Protein L1 is also a translational repressor protein, it controls the translation of the L11 operon by binding to its mRNA. The sequence is that of Large ribosomal subunit protein uL1 from Ureaplasma parvum serovar 3 (strain ATCC 27815 / 27 / NCTC 11736).